A 367-amino-acid polypeptide reads, in one-letter code: Quinolinate synthase (367 aa).

Residues histidine 45 and serine 62 each contribute to the iminosuccinate site. Cysteine 109 is a binding site for [4Fe-4S] cluster. Iminosuccinate is bound by residues 140–142 and serine 161; that span reads YVN. Residue cysteine 229 coordinates [4Fe-4S] cluster. Iminosuccinate contacts are provided by residues 255 to 257 and threonine 272; that span reads HPE. A [4Fe-4S] cluster-binding site is contributed by cysteine 319.

The protein belongs to the quinolinate synthase family. Type 3 subfamily. Requires [4Fe-4S] cluster as cofactor.

It is found in the cytoplasm. The enzyme catalyses iminosuccinate + dihydroxyacetone phosphate = quinolinate + phosphate + 2 H2O + H(+). The protein operates within cofactor biosynthesis; NAD(+) biosynthesis; quinolinate from iminoaspartate: step 1/1. Functionally, catalyzes the condensation of iminoaspartate with dihydroxyacetone phosphate to form quinolinate. The protein is Quinolinate synthase of Geobacillus kaustophilus (strain HTA426).